Consider the following 115-residue polypeptide: U3-lycotoxin-Ls1a (115 aa).

A signal peptide spans 1–20 (MKFVLLFGVLLVTLFSYSSA). Positions 21-44 (EMLDDFDQAVEDELLSLIEKEEAR) are excised as a propeptide. 4 cysteine pairs are disulfide-bonded: Cys-48–Cys-63, Cys-55–Cys-72, Cys-62–Cys-87, and Cys-74–Cys-85.

It belongs to the neurotoxin 19 (CSTX) family. 01 subfamily. Expressed by the venom gland.

The protein localises to the secreted. This Lycosa singoriensis (Wolf spider) protein is U3-lycotoxin-Ls1a.